A 207-amino-acid chain; its full sequence is Large ribosomal subunit protein uL4 (207 aa).

Residues 59–78 (GSGKKPFKQKGTGQARQGCK) form a disordered region.

It belongs to the universal ribosomal protein uL4 family. As to quaternary structure, part of the 50S ribosomal subunit.

One of the primary rRNA binding proteins, this protein initially binds near the 5'-end of the 23S rRNA. It is important during the early stages of 50S assembly. It makes multiple contacts with different domains of the 23S rRNA in the assembled 50S subunit and ribosome. Functionally, forms part of the polypeptide exit tunnel. The polypeptide is Large ribosomal subunit protein uL4 (Geotalea daltonii (strain DSM 22248 / JCM 15807 / FRC-32) (Geobacter daltonii)).